Consider the following 86-residue polypeptide: Neurotoxin-like protein pMD18-NTL1/2/4/5 (86 aa).

A signal peptide spans 1-21 (MKTLLLTLVVLTIACLDLGYT). 4 disulfides stabilise this stretch: C24/C45, C38/C62, C66/C78, and C79/C84.

It belongs to the three-finger toxin family. Short-chain subfamily. Orphan group IX sub-subfamily. In terms of tissue distribution, expressed by the venom gland.

Its subcellular location is the secreted. This Bungarus multicinctus (Many-banded krait) protein is Neurotoxin-like protein pMD18-NTL1/2/4/5.